Consider the following 556-residue polypeptide: MNVMQENQIKLIEHIKQAVVQAVGLEETEVPEILLEVPKDKKHGDYSTNIAMQLARVAKKAPRQIAESIVPELKKDNKLIKEVEIAGPGFINFYLDNAYLTDLVPVILTEDKKYGESDFGKGEKFQIEFVSANPTGDLHLGHARGAAIGDSLANIMKMAGFDVSREYYINDAGNQINNLVLSAEARYFEALGLESEFPEDGYRGADIISLGKDLAAKYGDKYVHTSEEERRSIFRVDALAFETGKLRADLEEFRVSFDEWFSETSLYEENKVLPALERLRENGYIYEQDGATWLRTTDFEDDKDRVLIKSDGSYTYFLPDIAYHLNKLERGFDVLIDIWGADHHGYIPRMRAAIEALGYSPNQLEVEIIQLVHLFEDGVQVKMSKRTGKSVTMRDLIEEVGLDATRYFFAMRSSDTHMNFDMSLAKSTSNDNPVYYVQYAHARISSILRSGKEQGLEVTKDADMSLLQTEAEYDLLKVLGEFADVVAEAAAKRAPHRIVRYLNDLASAFHRFYNSNKVLDMDNLEVTKARLALIKTAQITLRNGLTLLGVSAPEKM.

The short motif at 132–142 (ANPTGDLHLGH) is the 'HIGH' region element.

It belongs to the class-I aminoacyl-tRNA synthetase family. In terms of assembly, monomer.

It is found in the cytoplasm. The catalysed reaction is tRNA(Arg) + L-arginine + ATP = L-arginyl-tRNA(Arg) + AMP + diphosphate. This Listeria monocytogenes serovar 1/2a (strain ATCC BAA-679 / EGD-e) protein is Arginine--tRNA ligase.